A 156-amino-acid chain; its full sequence is uncharacterized protein (156 aa).

The region spanning 1–145 is the N-acetyltransferase domain; sequence MIIRKFSSKD…DAILMIKKKP (145 aa).

The protein belongs to the acetyltransferase family.

The protein resides in the cytoplasm. This is an uncharacterized protein from Methanocaldococcus jannaschii (strain ATCC 43067 / DSM 2661 / JAL-1 / JCM 10045 / NBRC 100440) (Methanococcus jannaschii).